Reading from the N-terminus, the 513-residue chain is Tyrosine-protein phosphatase non-receptor type substrate 1 (513 aa).

The signal sequence occupies residues 1-31 (MEPAGPAPGRLGPLLLCLLLSASCFCTGATG). The region spanning 32 to 137 (KELKVTQPEK…SSEPDTEIQS (106 aa)) is the Ig-like V-type domain. Topologically, residues 32-373 (KELKVTQPEK…PDNNATHNWN (342 aa)) are extracellular. N-linked (GlcNAc...) asparagine glycosylation is found at N54, N92, N168, N180, N205, N209, N246, N271, N293, N302, N312, N320, N345, and N367. A disulfide bridge connects residues C55 and C121. Ig-like C1-type domains follow at residues 149–248 (PSPP…ANLS) and 255–343 (PTVK…PAIT). A disulfide bridge connects residues C171 and C229. Residues C274 and C332 are joined by a disulfide bond. A helical transmembrane segment spans residues 374–394 (VFIGVGVACALLVVLLMAALY). At 395 to 511 (LLRIKQKKAK…FSEYASVQVQ (117 aa)) the chain is on the cytoplasmic side. Y440 bears the Phosphotyrosine; by Tyr-kinases mark. The short motif at 440 to 443 (YADL) is the SH2-binding element. The segment at 444–513 (NLPKEKKPAP…EYASVQVQRK (70 aa)) is disordered. The short motif at 450–455 (KPAPRA) is the SH3-binding element. 3 positions are modified to phosphotyrosine; by Tyr-kinases: Y464, Y481, and Y505. 3 short sequence motifs (SH2-binding) span residues 464–467 (YASI), 481–484 (YADL), and 505–508 (YASV). The span at 504-513 (EYASVQVQRK) shows a compositional bias: polar residues.

In terms of assembly, binds PTPN11 when tyrosine-phosphorylated, except in macrophages, where it primarily binds PTPN6. Binds GRB2 vitro. Binds FGR. Binds JAK2 irrespective of its phosphorylation status and forms a stable complex. Binds SCAP1 and/or SCAP2. The resulting complex recruits FYB1. Binds PTK2B. Interacts with TRIM2. N-glycosylated. Post-translationally, phosphorylated on tyrosine residues. In terms of tissue distribution, highly expressed in cerebral cortex, brain, spinal cord, cerebellum and spleen, and at much lower levels in kidney, thymus, heart, lung and liver. Within the cerebellum, highly expressed throughout the molecular layer, and in synaptic glomeruli in the granule cell layer. Detected in neurons of the hippocampus and dentate gyrus, and in olfactory bulb. Not detected in Purkinje cells. Highly expressed in the plexiform layers, optic fiber layer and the outer segments of the photoreceptor layer in the retina. Highly expressed in macrophages. Isoform 3 is detected at very low levels in all tissues tested.

The protein resides in the membrane. In terms of biological role, immunoglobulin-like cell surface receptor for CD47. Acts as a docking protein and induces translocation of PTPN6, PTPN11 and other binding partners from the cytosol to the plasma membrane. Supports adhesion of cerebellar neurons, neurite outgrowth and glial cell attachment. May play a key role in intracellular signaling during synaptogenesis and in synaptic function. Involved in the negative regulation of receptor tyrosine kinase-coupled cellular responses induced by cell adhesion, growth factors or insulin. Mediates negative regulation of phagocytosis, mast cell activation and dendritic cell activation. CD47 binding prevents maturation of immature dendritic cells and inhibits cytokine production by mature dendritic cells. Plays a role in antiviral immunity and limits new world arenavirus infection by decreasing virus internalization. Receptor for THBS1. Interaction with THBS1 stimulates phosphorylation of SIRPA. In response to THBS1, involved in ROS signaling in non-phagocytic cells, stimulating NADPH oxidase-derived ROS production. In Mus musculus (Mouse), this protein is Tyrosine-protein phosphatase non-receptor type substrate 1 (Sirpa).